Reading from the N-terminus, the 550-residue chain is 4-coumarate--CoA ligase-like 8 (550 aa).

6 residues coordinate ATP: serine 207, serine 208, glycine 209, threonine 210, threonine 211, and lysine 215. Phenylalanine 253 contributes to the (E)-4-coumaroyl-AMP binding site. Arginine 274 is a CoA binding site. Residues 276–347 are SBD1; it reads DLGEMMAAVE…KKYPTVDVYQ (72 aa). Glycine 325, glutamine 347, glycine 348, and threonine 352 together coordinate (E)-4-coumaroyl-AMP. ATP-binding residues include glutamine 347, glycine 348, threonine 352, aspartate 430, and arginine 445. Residues 348-412 form an SBD2 region; that stretch reads GYALTESNGA…LKGPSIAKGY (65 aa). (E)-4-coumaroyl-AMP-binding residues include lysine 447 and lysine 451. CoA-binding residues include lysine 453 and glycine 454. Lysine 536 lines the ATP pocket. Positions 548-550 match the Microbody targeting signal motif; the sequence is SKI.

It belongs to the ATP-dependent AMP-binding enzyme family. It depends on Mg(2+) as a cofactor.

The protein localises to the peroxisome. The catalysed reaction is (E)-4-coumarate + ATP + CoA = (E)-4-coumaroyl-CoA + AMP + diphosphate. The enzyme catalyses (E)-4-coumarate + ATP + H(+) = (E)-4-coumaroyl-AMP + diphosphate. It carries out the reaction (E)-4-coumaroyl-AMP + CoA = (E)-4-coumaroyl-CoA + AMP + H(+). Carboxylate--CoA ligase that may use 4-coumarate as substrate. Follows a two-step reaction mechanism, wherein the carboxylate substrate first undergoes adenylation by ATP, followed by a thioesterification in the presence of CoA to yield the final CoA thioester. This chain is 4-coumarate--CoA ligase-like 8, found in Arabidopsis thaliana (Mouse-ear cress).